A 194-amino-acid chain; its full sequence is MQAVRNAGSRFLRSWTWPQTAGRVVARTPAGTICTGARQLQDAAAKQKVEQNAAPSHTKFSIYPPIPGEESSLRWAGKKFEEIPIAHIKASHNNTQIQVVSASNEPLAFASCGTEGFRNAKKGTGIAAQTAGIAAAARAKQKGVIHIRVVVKGLGPGRLSAMHGLIMGGLEVISITDNTPIPHNGCRPRKARKL.

The protein belongs to the universal ribosomal protein uS11 family. Component of the mitochondrial small ribosomal subunit (mt-SSU). Mature mammalian 55S mitochondrial ribosomes consist of a small (28S) and a large (39S) subunit. The 28S small subunit contains a 12S ribosomal RNA (12S mt-rRNA) and 30 different proteins. The 39S large subunit contains a 16S rRNA (16S mt-rRNA), a copy of mitochondrial valine transfer RNA (mt-tRNA(Val)), which plays an integral structural role, and 52 different proteins.

It is found in the mitochondrion. In Homo sapiens (Human), this protein is Small ribosomal subunit protein uS11m (MRPS11).